The primary structure comprises 306 residues: Aspartate carbamoyltransferase catalytic subunit (306 aa).

2 residues coordinate carbamoyl phosphate: arginine 53 and threonine 54. Lysine 82 is a binding site for L-aspartate. Positions 103, 131, and 134 each coordinate carbamoyl phosphate. L-aspartate contacts are provided by arginine 164 and arginine 226. Carbamoyl phosphate is bound by residues leucine 263 and proline 264.

The protein belongs to the aspartate/ornithine carbamoyltransferase superfamily. ATCase family. Heterododecamer (2C3:3R2) of six catalytic PyrB chains organized as two trimers (C3), and six regulatory PyrI chains organized as three dimers (R2).

The enzyme catalyses carbamoyl phosphate + L-aspartate = N-carbamoyl-L-aspartate + phosphate + H(+). The protein operates within pyrimidine metabolism; UMP biosynthesis via de novo pathway; (S)-dihydroorotate from bicarbonate: step 2/3. Functionally, catalyzes the condensation of carbamoyl phosphate and aspartate to form carbamoyl aspartate and inorganic phosphate, the committed step in the de novo pyrimidine nucleotide biosynthesis pathway. This Methanocaldococcus jannaschii (strain ATCC 43067 / DSM 2661 / JAL-1 / JCM 10045 / NBRC 100440) (Methanococcus jannaschii) protein is Aspartate carbamoyltransferase catalytic subunit.